Reading from the N-terminus, the 521-residue chain is Tigger transposable element-derived protein 6 (521 aa).

The region spanning asparagine 3–phenylalanine 54 is the HTH psq-type domain. 2 consecutive DNA-binding regions (H-T-H motif) follow at residues lysine 30–aspartate 50 and serine 99–arginine 130. In terms of domain architecture, HTH CENPB-type spans glutamine 66 to alanine 137. A DDE-1 domain is found at tyrosine 170 to tryptophan 372.

Belongs to the tigger transposable element derived protein family.

The protein resides in the nucleus. This is Tigger transposable element-derived protein 6 (TIGD6) from Homo sapiens (Human).